Consider the following 309-residue polypeptide: Ribosomal RNA small subunit methyltransferase H (309 aa).

S-adenosyl-L-methionine is bound by residues 44–46 (GGH), Asp-62, Phe-102, Asp-118, and Gln-125. The tract at residues 289-309 (LEQQRNSRARSAKLRVAARSS) is disordered.

It belongs to the methyltransferase superfamily. RsmH family.

Its subcellular location is the cytoplasm. It carries out the reaction cytidine(1402) in 16S rRNA + S-adenosyl-L-methionine = N(4)-methylcytidine(1402) in 16S rRNA + S-adenosyl-L-homocysteine + H(+). Its function is as follows. Specifically methylates the N4 position of cytidine in position 1402 (C1402) of 16S rRNA. The protein is Ribosomal RNA small subunit methyltransferase H of Synechococcus sp. (strain JA-3-3Ab) (Cyanobacteria bacterium Yellowstone A-Prime).